Here is a 338-residue protein sequence, read N- to C-terminus: Nucleoid-associated protein HI_0839 (338 aa).

The protein belongs to the YejK family.

The protein localises to the cytoplasm. The protein resides in the nucleoid. This Haemophilus influenzae (strain ATCC 51907 / DSM 11121 / KW20 / Rd) protein is Nucleoid-associated protein HI_0839.